The following is a 662-amino-acid chain: Interferon-induced GTP-binding protein Mx1 (662 aa).

Met1 carries the post-translational modification N-acetylmethionine; in Interferon-induced GTP-binding protein Mx1; alternate. The Dynamin-type G domain occupies Asp67–Pro340. Residues Gly77–Ser84 are G1 motif. Gly77 to Ser84 lines the GTP pocket. Residues Val102–Arg104 are G2 motif. A G3 motif region spans residues Asp178–Gly181. GTP contacts are provided by residues Asp178–Ile182 and Thr247–Asp250. Residues Thr247–Asp250 form a G4 motif region. The segment at Lys279–Gly282 is G5 motif. The bundle signaling element (BSE) stretch occupies residues Leu341–Glu366. Residues Glu366–Cys533 are middle domain. The tract at residues Asp367–Glu632 is stalk. Positions Lys554–Lys557 are critical for lipid-binding. The GED domain maps to Met574–Gly662.

It belongs to the TRAFAC class dynamin-like GTPase superfamily. Dynamin/Fzo/YdjA family. Homotetramer. Oligomerizes into multimeric filamentous or ring-like structures by virtue of its stalk domain. Oligomerization is critical for GTPase activity, protein stability, and recognition of viral target structures. Interacts with TRPC1, TRPC3, TRPC4, TRPC5, TRPC6 and TRPC7. Interacts with HSPA5. Interacts with DDX39A and DDX39B. Interacts with TUBB/TUBB5. The GTP-bound form interacts (via C-terminus) with THOV P5 protein. The GTP-bound form interacts with LACV protein N. Interacts with CCHFV protein N. ISGylated.

Its subcellular location is the cytoplasm. It localises to the endoplasmic reticulum membrane. It is found in the perinuclear region. The protein resides in the nucleus. Functionally, interferon-induced dynamin-like GTPase with antiviral activity against a wide range of RNA viruses and some DNA viruses. Its target viruses include negative-stranded RNA viruses and HBV through binding and inactivation of their ribonucleocapsid. May also antagonize reoviridae and asfarviridae replication. Inhibits thogoto virus (THOV) replication by preventing the nuclear import of viral nucleocapsids. Inhibits La Crosse virus (LACV) replication by sequestering viral nucleoprotein in perinuclear complexes, preventing genome amplification, budding, and egress. Inhibits influenza A virus (IAV) replication by decreasing or delaying NP synthesis and by blocking endocytic traffic of incoming virus particles. Enhances ER stress-mediated cell death after influenza virus infection. May regulate the calcium channel activity of TRPCs. The polypeptide is Interferon-induced GTP-binding protein Mx1 (MX1) (Homo sapiens (Human)).